Consider the following 1016-residue polypeptide: Protein kinase C-like 2 (1016 aa).

The REM-1 1 domain maps to 1-68 (MDMIDEAITE…LEKLKLRKNG (68 aa)). A disordered region spans residues 68–101 (GVRKSNSEKPSVGIEKNPSFSTTKSAKSFSSTSS). Over residues 86 to 101 (SFSTTKSAKSFSSTSS) the composition is skewed to low complexity. Residues 111 to 188 (NYDTPLTISK…LKRYHDLHIE (78 aa)) enclose the REM-1 2 domain. Residues 195 to 307 (PSTESRGNLN…VEKQRRKKVE (113 aa)) form the C2 domain. 2 consecutive Phorbol-ester/DAG-type zinc fingers follow at residues 405-453 (GHKF…VTKC) and 473-523 (PHHF…PDFC). A disordered region spans residues 543 to 602 (YKAQQHKQKSSHHKHHHHKKSKSSSSKHKENDKASVSITTTTTPSITPADPVPTSPKPLA). Residues 546–568 (QQHKQKSSHHKHHHHKKSKSSSS) show a composition bias toward basic residues. The span at 579-590 (SITTTTTPSITP) shows a compositional bias: low complexity. Residues 683 to 942 (FTFLSVLGKG…AEDVMTHPFF (260 aa)) enclose the Protein kinase domain. ATP-binding positions include 689–697 (LGKGNFGKV) and lysine 712. Aspartate 808 (proton acceptor) is an active-site residue. Residues 943 to 1013 (SNINWDDIYH…SCEDDKPSTT (71 aa)) enclose the AGC-kinase C-terminal domain. A Phosphothreonine modification is found at threonine 984.

This sequence belongs to the protein kinase superfamily. AGC Ser/Thr protein kinase family. PKC subfamily. As to quaternary structure, interacts with rho2.

It catalyses the reaction L-seryl-[protein] + ATP = O-phospho-L-seryl-[protein] + ADP + H(+). It carries out the reaction L-threonyl-[protein] + ATP = O-phospho-L-threonyl-[protein] + ADP + H(+). Functionally, involved in the control of the cell shape. Target of the inhibitor staurosporine. In Schizosaccharomyces pombe (strain 972 / ATCC 24843) (Fission yeast), this protein is Protein kinase C-like 2 (pck2).